The chain runs to 434 residues: UDP-N-acetylglucosamine 1-carboxyvinyltransferase (434 aa).

22-23 (KN) serves as a coordination point for phosphoenolpyruvate. UDP-N-acetyl-alpha-D-glucosamine is bound at residue Arg97. Asp121 acts as the Proton donor in catalysis. Residues Asp319 and Met341 each coordinate UDP-N-acetyl-alpha-D-glucosamine.

Belongs to the EPSP synthase family. MurA subfamily.

The protein resides in the cytoplasm. The catalysed reaction is phosphoenolpyruvate + UDP-N-acetyl-alpha-D-glucosamine = UDP-N-acetyl-3-O-(1-carboxyvinyl)-alpha-D-glucosamine + phosphate. Its pathway is cell wall biogenesis; peptidoglycan biosynthesis. Its function is as follows. Cell wall formation. Adds enolpyruvyl to UDP-N-acetylglucosamine. The sequence is that of UDP-N-acetylglucosamine 1-carboxyvinyltransferase from Bacteroides fragilis (strain ATCC 25285 / DSM 2151 / CCUG 4856 / JCM 11019 / LMG 10263 / NCTC 9343 / Onslow / VPI 2553 / EN-2).